Here is a 513-residue protein sequence, read N- to C-terminus: Sterol 14-alpha demethylase (513 aa).

Residues 8–28 (AYALLAFVAIMALNVTYQFLF) form a helical membrane-spanning segment. 2 N-linked (GlcNAc...) asparagine glycosylation sites follow: Asn-32 and Asn-332. Cys-453 contributes to the heme binding site.

It belongs to the cytochrome P450 family. Heme serves as cofactor.

Its subcellular location is the endoplasmic reticulum membrane. It catalyses the reaction a 14alpha-methyl steroid + 3 reduced [NADPH--hemoprotein reductase] + 3 O2 = a Delta(14) steroid + formate + 3 oxidized [NADPH--hemoprotein reductase] + 4 H2O + 4 H(+). It carries out the reaction a 14alpha-methyl steroid + reduced [NADPH--hemoprotein reductase] + O2 = a 14alpha-hydroxymethyl steroid + oxidized [NADPH--hemoprotein reductase] + H2O + H(+). The catalysed reaction is a 14alpha-hydroxymethyl steroid + reduced [NADPH--hemoprotein reductase] + O2 = a 14alpha-formyl steroid + oxidized [NADPH--hemoprotein reductase] + 2 H2O + H(+). The enzyme catalyses a 14alpha-formyl steroid + reduced [NADPH--hemoprotein reductase] + O2 = a Delta(14) steroid + formate + oxidized [NADPH--hemoprotein reductase] + H2O + 2 H(+). It catalyses the reaction lanosterol + 3 reduced [NADPH--hemoprotein reductase] + 3 O2 = 4,4-dimethyl-5alpha-cholesta-8,14,24-trien-3beta-ol + formate + 3 oxidized [NADPH--hemoprotein reductase] + 4 H2O + 4 H(+). It carries out the reaction lanosterol + reduced [NADPH--hemoprotein reductase] + O2 = 32-hydroxylanosterol + oxidized [NADPH--hemoprotein reductase] + H2O + H(+). The catalysed reaction is 32-hydroxylanosterol + reduced [NADPH--hemoprotein reductase] + O2 = 32-oxolanosterol + oxidized [NADPH--hemoprotein reductase] + 2 H2O + H(+). The enzyme catalyses 32-oxolanosterol + reduced [NADPH--hemoprotein reductase] + O2 = 4,4-dimethyl-5alpha-cholesta-8,14,24-trien-3beta-ol + formate + oxidized [NADPH--hemoprotein reductase] + H2O + 2 H(+). It catalyses the reaction eburicol + 3 reduced [NADPH--hemoprotein reductase] + 3 O2 = 14-demethyleburicol + formate + 3 oxidized [NADPH--hemoprotein reductase] + 4 H2O + 4 H(+). It carries out the reaction eburicol + reduced [NADPH--hemoprotein reductase] + O2 = 32-hydroxyeburicol + oxidized [NADPH--hemoprotein reductase] + H2O + H(+). The catalysed reaction is 32-hydroxyeburicol + reduced [NADPH--hemoprotein reductase] + O2 = 32-oxoeburicol + oxidized [NADPH--hemoprotein reductase] + 2 H2O + H(+). The enzyme catalyses 32-oxoeburicol + reduced [NADPH--hemoprotein reductase] + O2 = 14-demethyleburicol + formate + oxidized [NADPH--hemoprotein reductase] + H2O + 2 H(+). Its pathway is steroid biosynthesis; sterol biosynthesis. Its function is as follows. Sterol 14alpha-demethylase, encoded by cyp51A, cyp51B and cyp51C, that plays a critical role in the third module of ergosterol biosynthesis pathway, being ergosterol the major sterol component in fungal membranes that participates in a variety of functions. The third module or late pathway involves the ergosterol synthesis itself through consecutive reactions that mainly occur in the endoplasmic reticulum (ER) membrane. In filamentous fungi, during the initial step of this module, lanosterol (lanosta-8,24-dien-3beta-ol) can be metabolized to eburicol. Sterol 14alpha-demethylase catalyzes the three-step oxidative removal of the 14alpha-methyl group (C-32) of both these sterols in the form of formate, and converts eburicol and lanosterol to 14-demethyleburicol (4,4,24-trimethylergosta-8,14,24(28)-trienol) and 4,4-dimethyl-5alpha-cholesta-8,14,24-trien-3beta-ol, respectively, which are further metabolized by other enzymes in the pathway to ergosterol. Can also use substrates not intrinsic to fungi, such as 24,25-dihydrolanosterol (DHL), producing 4,4'-dimethyl-8,14-cholestadien-3-beta-ol, but at lower rates than the endogenous substrates. As a target of azole drugs, plays a crucial role in azole drug susceptibility. The chain is Sterol 14-alpha demethylase from Aspergillus flavus (strain ATCC 200026 / FGSC A1120 / IAM 13836 / NRRL 3357 / JCM 12722 / SRRC 167).